The primary structure comprises 157 residues: Small ribosomal subunit protein uS7 (157 aa).

It belongs to the universal ribosomal protein uS7 family. Part of the 30S ribosomal subunit. Contacts proteins S9 and S11.

In terms of biological role, one of the primary rRNA binding proteins, it binds directly to 16S rRNA where it nucleates assembly of the head domain of the 30S subunit. Is located at the subunit interface close to the decoding center, probably blocks exit of the E-site tRNA. The polypeptide is Small ribosomal subunit protein uS7 (Rhodopirellula baltica (strain DSM 10527 / NCIMB 13988 / SH1)).